Reading from the N-terminus, the 315-residue chain is ATP synthase gamma chain (315 aa).

In terms of assembly, F-type ATPases have 2 components, CF(1) - the catalytic core - and CF(0) - the membrane proton channel. CF(1) has five subunits: alpha(3), beta(3), gamma(1), delta(1), epsilon(1). CF(0) has four main subunits: a(1), b(1), b'(1) and c(9-12).

The protein localises to the cellular thylakoid membrane. Functionally, produces ATP from ADP in the presence of a proton gradient across the membrane. The gamma chain is believed to be important in regulating ATPase activity and the flow of protons through the CF(0) complex. Its function is as follows. The complex from the organism is particularly stable to disruption and remains functional after 6 hrs at 55 degrees Celsius. In Thermosynechococcus vestitus (strain NIES-2133 / IAM M-273 / BP-1), this protein is ATP synthase gamma chain.